The sequence spans 182 residues: Adenylate kinase (182 aa).

12–17 (GAGKGT) is a binding site for ATP. The segment at 32–61 (STGDLLRAEVGAKTPLGQEAAAVMNRGELV) is NMP. AMP is bound by residues threonine 33, arginine 38, 59–61 (ELV), 85–88 (GFPR), and glutamine 92. Positions 126 to 132 (SRGRSDD) are LID. Residue arginine 127 coordinates ATP. The AMP site is built by arginine 129 and arginine 140. Glycine 168 contacts ATP.

Belongs to the adenylate kinase family. Monomer.

It is found in the cytoplasm. The enzyme catalyses AMP + ATP = 2 ADP. It participates in purine metabolism; AMP biosynthesis via salvage pathway; AMP from ADP: step 1/1. In terms of biological role, catalyzes the reversible transfer of the terminal phosphate group between ATP and AMP. Plays an important role in cellular energy homeostasis and in adenine nucleotide metabolism. The chain is Adenylate kinase from Prochlorococcus marinus (strain MIT 9303).